A 95-amino-acid chain; its full sequence is uncharacterized protein (95 aa).

A helical membrane pass occupies residues 3 to 23; that stretch reads FVIIIAILLLGISLILAFTVL.

Its subcellular location is the membrane. This is an uncharacterized protein from Methanocaldococcus jannaschii (strain ATCC 43067 / DSM 2661 / JAL-1 / JCM 10045 / NBRC 100440) (Methanococcus jannaschii).